Reading from the N-terminus, the 819-residue chain is Leucine--tRNA ligase (819 aa).

The short motif at Pro-40–His-51 is the 'HIGH' region element. Residues Lys-600–Ser-604 carry the 'KMSKS' region motif. ATP is bound at residue Lys-603.

This sequence belongs to the class-I aminoacyl-tRNA synthetase family.

The protein localises to the cytoplasm. The enzyme catalyses tRNA(Leu) + L-leucine + ATP = L-leucyl-tRNA(Leu) + AMP + diphosphate. This Chlamydia muridarum (strain MoPn / Nigg) protein is Leucine--tRNA ligase.